Here is a 97-residue protein sequence, read N- to C-terminus: Ice-structuring protein (97 aa).

Positions 1 to 23 (MALSLFTVGQLIFLFWTLRITEA) are cleaved as a signal peptide. Positions 24 to 48 (NPDPAAKAAPAAVADPAAAAAAAVA) are cleaved as a propeptide — removed by a dipeptidylpeptidase.

This sequence belongs to the type-I AFP family. Detected in blood serum (at protein level).

It is found in the secreted. Contributes to protect fish blood from freezing at subzero sea water temperatures. Lowers the blood freezing point. Binds to nascent ice crystals and prevents further growth. The chain is Ice-structuring protein from Myzopsetta ferruginea (Yellowtail flounder).